A 243-amino-acid chain; its full sequence is 2-O-methyltransferase NoeI (243 aa).

The protein belongs to the FkbM methyltransferase family.

It localises to the cytoplasm. In terms of biological role, required for 2-O-methylation of the fucosyl group of Nod factors. The protein is 2-O-methyltransferase NoeI (noeI) of Sinorhizobium fredii (strain NBRC 101917 / NGR234).